A 316-amino-acid chain; its full sequence is RING finger protein 148 (316 aa).

Positions 1 to 12 (MLLCVSCLSVNG) are cleaved as a signal peptide. N-linked (GlcNAc...) asparagine glycosylation occurs at Asn-56. The region spanning 84 to 178 (VSGAVVLPEG…GNLKGMELLH (95 aa)) is the PA domain. A run of 2 helical transmembrane segments spans residues 173-193 (GMELLHLIQQGVYVTIIIEVG) and 204-224 (VMSLFTFLAATVTYLFLYCAW). The segment at 269-310 (CVVCFDMYKAQDVIRILTCKHFFHKTCIDPWLLAHRTCPMCK) adopts an RING-type; atypical zinc-finger fold.

It is found in the membrane. The protein is RING finger protein 148 (Rnf148) of Mus musculus (Mouse).